A 461-amino-acid polypeptide reads, in one-letter code: Interleukin-1 receptor-associated kinase 4 (461 aa).

Met-1 carries the post-translational modification N-acetylmethionine. Residues 20 to 104 enclose the Death domain; sequence RKLSDFIDPQ…APASLLLPDA (85 aa). Position 34 is an N6-acetyllysine (Lys-34). Residues 187 to 455 enclose the Protein kinase domain; the sequence is SVGGNKMGEG…PDIKKVQQLL (269 aa). ATP contacts are provided by residues 193–201 and Lys-214; that span reads MGEGGFGVV. The active-site Proton acceptor is the Asp-312. Residues 314–317 and Asp-330 each bind ATP; that span reads KSAN. 2 positions are modified to phosphothreonine: Thr-343 and Thr-346. A Phosphoserine modification is found at Ser-347.

This sequence belongs to the protein kinase superfamily. TKL Ser/Thr protein kinase family. Pelle subfamily. In terms of assembly, associates with MYD88 and IRAK2 to form a ternary complex called the Myddosome. Once phosphorylated, IRAK4 dissociates from the receptor complex and then associates with the TNF receptor-associated factor 6 (TRAF6), IRAK1, and PELI1; this intermediate complex is required for subsequent NF-kappa-B activation. Direct binding of SMAD6 to PELI1 prevents complex formation and hence negatively regulates IL1R-TLR signaling and eventually NF-kappa-B-mediated gene expression. Interacts with IL1RL1. Interacts (when phosphorylated) with IRAK1. May interact (when phosphorylated) with IRAK3. Mg(2+) is required as a cofactor. In terms of processing, phosphorylated.

Its subcellular location is the cytoplasm. It catalyses the reaction L-seryl-[protein] + ATP = O-phospho-L-seryl-[protein] + ADP + H(+). The enzyme catalyses L-threonyl-[protein] + ATP = O-phospho-L-threonyl-[protein] + ADP + H(+). Functionally, serine/threonine-protein kinase that plays a critical role in initiating innate immune response against foreign pathogens. Involved in Toll-like receptor (TLR) and IL-1R signaling pathways. Is rapidly recruited by MYD88 to the receptor-signaling complex upon TLR activation to form the Myddosome together with IRAK2. Phosphorylates initially IRAK1, thus stimulating the kinase activity and intensive autophosphorylation of IRAK1. Phosphorylates E3 ubiquitin ligases Pellino proteins (PELI1, PELI2 and PELI3) to promote pellino-mediated polyubiquitination of IRAK1. Then, the ubiquitin-binding domain of IKBKG/NEMO binds to polyubiquitinated IRAK1 bringing together the IRAK1-MAP3K7/TAK1-TRAF6 complex and the NEMO-IKKA-IKKB complex. In turn, MAP3K7/TAK1 activates IKKs (CHUK/IKKA and IKBKB/IKKB) leading to NF-kappa-B nuclear translocation and activation. Alternatively, phosphorylates TIRAP to promote its ubiquitination and subsequent degradation. Phosphorylates NCF1 and regulates NADPH oxidase activation after LPS stimulation suggesting a similar mechanism during microbial infections. This chain is Interleukin-1 receptor-associated kinase 4 (IRAK4), found in Bos taurus (Bovine).